The sequence spans 724 residues: Propionyl-CoA carboxylase alpha chain, mitochondrial (724 aa).

The N-terminal 48 residues, 1 to 48 (MAGQWVRTVALLAARRHWRRSSQQQLLGTLKHAPVYSYQCLVVSRSLS), are a transit peptide targeting the mitochondrion. In terms of domain architecture, Biotin carboxylation spans 58–505 (TFDKILIANR…STKFLSDVYP (448 aa)). K61 is modified (N6-acetyllysine; alternate). N6-succinyllysine; alternate is present on K61. N6-succinyllysine is present on K115. K146 is modified (N6-acetyllysine; alternate). Residue K146 is modified to N6-succinyllysine; alternate. Position 150 is an N6-acetyllysine (K150). Residue K173 coordinates ATP. One can recognise an ATP-grasp domain in the interval 177-374 (KLLAKRAKVN…LVQEMILVAK (198 aa)). K184 carries the N6-succinyllysine modification. An N6-acetyllysine; alternate modification is found at K196. Residue K196 is modified to N6-succinyllysine; alternate. Residues 205–266 (AREI…PRHI), E257, and N292 contribute to the ATP site. S248 is subject to Phosphoserine. K258 is modified (N6-succinyllysine). K324 carries the post-translational modification N6-acetyllysine; alternate. K324 is subject to N6-succinyllysine; alternate. Residues E332, E345, and N347 each contribute to the Mg(2+) site. Mn(2+) contacts are provided by E332, E345, and N347. Residue R349 is part of the active site. K381 and K403 each carry N6-succinyllysine. Residue F405 participates in biotin binding. N6-acetyllysine is present on K492. An N6-succinyllysine mark is found at K498, K509, K554, and K644. Positions 645 to 724 (FMLEKVPKDT…GEGDLLVELE (80 aa)) constitute a Biotinyl-binding domain. N6-biotinyllysine; by HLCS is present on K690.

As to quaternary structure, the holoenzyme is a dodecamer composed of 6 PCCA/alpha subunits and 6 PCCB/beta subunits. Interacts (via the biotin carboxylation domain) with SIRT4. Interacts with SIRT3 and SIRT5. It depends on Mg(2+) as a cofactor. Mn(2+) is required as a cofactor. The cofactor is biotin. Post-translationally, acetylated. In terms of processing, the biotin cofactor is covalently attached to the C-terminal biotinyl-binding domain and is required for the catalytic activity. Biotinylation is catalyzed by HLCS.

The protein resides in the mitochondrion matrix. It carries out the reaction propanoyl-CoA + hydrogencarbonate + ATP = (S)-methylmalonyl-CoA + ADP + phosphate + H(+). It catalyses the reaction butanoyl-CoA + hydrogencarbonate + ATP = (2S)-ethylmalonyl-CoA + ADP + phosphate + H(+). Its pathway is metabolic intermediate metabolism; propanoyl-CoA degradation; succinyl-CoA from propanoyl-CoA: step 1/3. This is one of the 2 subunits of the biotin-dependent propionyl-CoA carboxylase (PCC), a mitochondrial enzyme involved in the catabolism of odd chain fatty acids, branched-chain amino acids isoleucine, threonine, methionine, and valine and other metabolites. Propionyl-CoA carboxylase catalyzes the carboxylation of propionyl-CoA/propanoyl-CoA to D-methylmalonyl-CoA/(S)-methylmalonyl-CoA. Within the holoenzyme, the alpha subunit catalyzes the ATP-dependent carboxylation of the biotin carried by the biotin carboxyl carrier (BCC) domain, while the beta subunit then transfers the carboxyl group from carboxylated biotin to propionyl-CoA. Propionyl-CoA carboxylase also significantly acts on butyryl-CoA/butanoyl-CoA, which is converted to ethylmalonyl-CoA/(2S)-ethylmalonyl-CoA. Other alternative minor substrates include (2E)-butenoyl-CoA/crotonoyl-CoA. This chain is Propionyl-CoA carboxylase alpha chain, mitochondrial, found in Mus musculus (Mouse).